The chain runs to 1130 residues: Putative beta-hexosaminidase (1130 aa).

A signal peptide spans 1–23 (MKWVKSGVGILGILLIICHAVTS). Composition is skewed to low complexity over residues 1001 to 1030 (PGQMRALGQQAGQALRGQGQQTGQQTLPAQ) and 1037 to 1072 (LTGQAAGTGVAGQSGQQPSAAGQGTQQGLPGQQRTG). Disordered stretches follow at residues 1001-1075 (PGQM…GVVP) and 1102-1130 (QMRGQGQIPQTQGAVAGAGQSRVPQQQAG).

Belongs to the glycosyl hydrolase 20 family. Prismatic layer of shell (at protein level). Expressed primarily in the mantle with highest level in the mantle edge and lower level in the mantle pallium.

Its subcellular location is the secreted. The catalysed reaction is Hydrolysis of terminal non-reducing N-acetyl-D-hexosamine residues in N-acetyl-beta-D-hexosaminides.. The protein operates within glycan degradation; chitin degradation. This chain is Putative beta-hexosaminidase, found in Pinctada maxima (Silver-lipped pearl oyster).